The chain runs to 630 residues: Glutathione hydrolase proenzyme 1 (630 aa).

Topologically, residues 1–49 (MGINTSSAQSSGAASIARSSVNVKSGNRHLSSNKKSATSALEERASRPS) are cytoplasmic. A helical; Signal-anchor for type II membrane protein membrane pass occupies residues 50–70 (ILVTFLVLAGTILSLYIWPIL). The Lumenal segment spans residues 71–630 (SPDLFFANQR…SRKQAVAAAY (560 aa)). N-linked (GlcNAc...) asparagine glycosylation is present at N156. R165 serves as a coordination point for L-glutamate. N180, N315, N397, and N417 each carry an N-linked (GlcNAc...) asparagine glycan. The active-site Nucleophile is the T441. L-glutamate contacts are provided by residues S459, N461, D483, 511-512 (SS), and 532-533 (GG). N-linked (GlcNAc...) asparagine glycosylation occurs at N612.

Belongs to the gamma-glutamyltransferase family. In terms of assembly, heterodimer composed of the light and heavy chains. The active site is located in the light chain. In terms of processing, cleaved by autocatalysis into a large and a small subunit.

The protein localises to the endoplasmic reticulum membrane. It carries out the reaction an N-terminal (5-L-glutamyl)-[peptide] + an alpha-amino acid = 5-L-glutamyl amino acid + an N-terminal L-alpha-aminoacyl-[peptide]. It catalyses the reaction glutathione + H2O = L-cysteinylglycine + L-glutamate. The catalysed reaction is an S-substituted glutathione + H2O = an S-substituted L-cysteinylglycine + L-glutamate. It participates in sulfur metabolism; glutathione metabolism. Its function is as follows. Catalyzes the transfer of the gamma-glutamyl moiety of glutathione (GSH) and other gamma-glutamyl compounds to amino acids and peptides. Major GSH-degrading enzyme, catalyzing the hydrolytic release of L-glutamate from GSH. This chain is Glutathione hydrolase proenzyme 1 (ggt1), found in Schizosaccharomyces pombe (strain 972 / ATCC 24843) (Fission yeast).